Consider the following 270-residue polypeptide: Phospholysine phosphohistidine inorganic pyrophosphate phosphatase (270 aa).

Positions 17 and 19 each coordinate Mg(2+). Substrate contacts are provided by residues 17–19 (DIS), 54–55 (TN), and Lys-189. Asp-214 lines the Mg(2+) pocket.

Belongs to the HAD-like hydrolase superfamily. In terms of assembly, homodimer. The cofactor is Mg(2+).

It localises to the cytoplasm. Its subcellular location is the nucleus. It catalyses the reaction diphosphate + H2O = 2 phosphate + H(+). In terms of biological role, phosphatase that hydrolyzes imidodiphosphate, 3-phosphohistidine and 6-phospholysine. Has broad substrate specificity and can also hydrolyze inorganic diphosphate, but with lower efficiency. In Rattus norvegicus (Rat), this protein is Phospholysine phosphohistidine inorganic pyrophosphate phosphatase (Lhpp).